A 315-amino-acid polypeptide reads, in one-letter code: Cytochrome c biogenesis protein CcsA (315 aa).

Helical transmembrane passes span 17 to 37 (LGFA…WAVA), 72 to 92 (ISNL…AQLF), 101 to 121 (IVSA…SFVL), 146 to 166 (VIMC…GVFL), 221 to 241 (SITA…VWAN), 255 to 272 (TWAL…HTRI), and 282 to 302 (AILA…VNLL).

Belongs to the CcmF/CycK/Ccl1/NrfE/CcsA family. May interact with ccs1.

It is found in the cellular thylakoid membrane. In terms of biological role, required during biogenesis of c-type cytochromes (cytochrome c6 and cytochrome f) at the step of heme attachment. The polypeptide is Cytochrome c biogenesis protein CcsA (Prochlorococcus marinus (strain NATL2A)).